The sequence spans 317 residues: MAVQGFQRRLLGSLNSTPTAIPQLGLAANQTGARCLEVSIPDGLFLSLGLVSLVENVLVVATIAKNRNLHSPTYCFICCLALSDLLVSGGNVLETVVILLLEASALAARAAVVQPLDNVIDVITCSSMVSSLCFLGAIAMDRYVSIFYALRYHSIVTLPRARQAIAAIWVASVLFSTLFIAYYDHAAVLLCLVVFFLAMLVLMAVLYVHMLARACQHAQGIARLHKRQRPLHQGFGLKGAVTLTILLGIFFLCWGPFFLHLTLIVLCPQHPTCSCIFKNFNLFLTLIICNAIIDPLIYAFRRQELRRTLKEGLTCSW.

Topologically, residues 1 to 37 (MAVQGFQRRLLGSLNSTPTAIPQLGLAANQTGARCLE) are extracellular. N-linked (GlcNAc...) asparagine glycosylation is present at asparagine 29. Residues 38 to 63 (VSIPDGLFLSLGLVSLVENVLVVATI) form a helical membrane-spanning segment. At 64–72 (AKNRNLHSP) the chain is on the cytoplasmic side. Residues 73–93 (TYCFICCLALSDLLVSGGNVL) form a helical membrane-spanning segment. The Extracellular portion of the chain corresponds to 94–118 (ETVVILLLEASALAARAAVVQPLDN). Residues 119–140 (VIDVITCSSMVSSLCFLGAIAM) traverse the membrane as a helical segment. Residues 141 to 163 (DRYVSIFYALRYHSIVTLPRARQ) lie on the Cytoplasmic side of the membrane. Residues 164–183 (AIAAIWVASVLFSTLFIAYY) form a helical membrane-spanning segment. The Extracellular portion of the chain corresponds to 184–191 (DHAAVLLC). A helical transmembrane segment spans residues 192–211 (LVVFFLAMLVLMAVLYVHML). Residues 212–240 (ARACQHAQGIARLHKRQRPLHQGFGLKGA) are Cytoplasmic-facing. A helical membrane pass occupies residues 241–266 (VTLTILLGIFFLCWGPFFLHLTLIVL). The Extracellular portion of the chain corresponds to 267-279 (CPQHPTCSCIFKN). A helical transmembrane segment spans residues 280–300 (FNLFLTLIICNAIIDPLIYAF). Topologically, residues 301-317 (RRQELRRTLKEGLTCSW) are cytoplasmic. The S-palmitoyl cysteine moiety is linked to residue cysteine 315.

The protein belongs to the G-protein coupled receptor 1 family. In terms of assembly, interacts with MGRN1, but does not undergo MGRN1-mediated ubiquitination; this interaction competes with GNAS-binding and thus inhibits agonist-induced cAMP production. Interacts with OPN3; the interaction results in a decrease in MC1R-mediated cAMP signaling and ultimately a decrease in melanin production in melanocytes.

It localises to the cell membrane. Its function is as follows. Receptor for MSH (alpha, beta and gamma) and ACTH. The activity of this receptor is mediated by G proteins which activate adenylate cyclase. Mediates melanogenesis, the production of eumelanin (black/brown) and phaeomelanin (red/yellow), via regulation of cAMP signaling in melanocytes. This Hylobates lar (Lar gibbon) protein is Melanocyte-stimulating hormone receptor (MC1R).